Here is a 143-residue protein sequence, read N- to C-terminus: Deoxyuridine 5'-triphosphate nucleotidohydrolase (143 aa).

Residues arginine 63 to glycine 65, asparagine 76, threonine 80 to aspartate 82, and lysine 90 each bind substrate.

It belongs to the dUTPase family. Requires Mg(2+) as cofactor.

The catalysed reaction is dUTP + H2O = dUMP + diphosphate + H(+). Its pathway is pyrimidine metabolism; dUMP biosynthesis; dUMP from dCTP (dUTP route): step 2/2. In terms of biological role, this enzyme is involved in nucleotide metabolism: it produces dUMP, the immediate precursor of thymidine nucleotides and it decreases the intracellular concentration of dUTP so that uracil cannot be incorporated into DNA. The chain is Deoxyuridine 5'-triphosphate nucleotidohydrolase from Finegoldia magna (strain ATCC 29328 / DSM 20472 / WAL 2508) (Peptostreptococcus magnus).